A 1970-amino-acid chain; its full sequence is MHGGGPPSGDSACPLRTIKRVQFGVLSPDELKRMSVTEGGIKYPETTEGGRPKLGGLMDPRQGVIERTGRCQTCAGNMTECPGHFGHIELAKPVFHVGFLVKTMKVLRCVCFFCSKLLVDSNNPKIKDILAKSKGQPKKRLTHVYDLCKGKNICEGGEEMDNKFGVEQPEGDEDLTKEKGHGGCGRYQPRIRRSGLELYAEWKHVNEDSQEKKILLSPERVHEIFKRISDEECFVLGMEPRYARPEWMIVTVLPVPPLSVRPAVVMQGSARNQDDLTHKLADIVKINNQLRRNEQNGAAAHVIAEDVKLLQFHVATMVDNELPGLPRAMQKSGRPLKSLKQRLKGKEGRVRGNLMGKRVDFSARTVITPDPNLSIDQVGVPRSIAANMTFAEIVTPFNIDRLQELVRRGNSQYPGAKYIIRDNGDRIDLRFHPKPSDLHLQTGYKVERHMCDGDIVIFNRQPTLHKMSMMGHRVRILPWSTFRLNLSVTTPYNADFDGDEMNLHLPQSLETRAEIQELAMVPRMIVTPQSNRPVMGIVQDTLTAVRKFTKRDVFLERGEVMNLLMFLSTWDGKVPQPAILKPRPLWTGKQIFSLIIPGHINCIRTHSTHPDDEDSGPYKHISPGDTKVVVENGELIMGILCKKSLGTSAGSLVHISYLEMGHDITRLFYSNIQTVINNWLLIEGHTIGIGDSIADSKTYQDIQNTIKKAKQDVIEVIEKAHNNELEPTPGNTLRQTFENQVNRILNDARDKTGSSAQKSLSEYNNFKSMVVSGAKGSKINISQVIAVVGQQNVEGKRIPFGFKHRTLPHFIKDDYGPESRGFVENSYLAGLTPTEFFFHAMGGREGLIDTAVKTAETGYIQRRLIKSMESVMVKYDATVRNSINQVVQLRYGEDGLAGESVEFQNLATLKPSNKAFEKKFRFDYTNERALRRTLQEDLVKDVLSNAHIQNELEREFERMREDREVLRVIFPTGDSKVVLPCNLLRMIWNAQKIFHINPRLPSDLHPIKVVEGVKELSKKLVIVNGDDPLSRQAQENATLLFNIHLRSTLCSRRMAEEFRLSGEAFDWLLGEIESKFNQAIAHPGEMVGALAAQSLGEPATQMTLNTFHYAGVSAKNVTLGVPRLKELINISKKPKTPSLTVFLLGQSARDAERAKDILCRLEHTTLRKVTANTAIYYDPNPQSTVVAEDQEWVNVYYEMPDFDVARISPWLLRVELDRKHMTDRKLTMEQIAEKINAGFGDDLNCIFNDDNAEKLVLRIRIMNSDENKMQEEEEVVDKMDDDVFLRCIESNMLTDMTLQGIEQISKVYMHLPQTDNKKKIIITEDGEFKALQEWILETDGVSLMRVLSEKDVDPVRTTSNDIVEIFTVLGIEAVRKALERELYHVISFDGSYVNYRHLALLCDTMTCRGHLMAITRHGVNRQDTGPLMKCSFEETVDVLMEAAAHGESDPMKGVSENIMLGQLAPAGTGCFDLLLDAEKCKYGMEIPTNIPGLGAAGPTGMFFGSAPSPMGGISPAMTPWNQGATPAYGAWSPSVGSGMTPGAAGFSPSAASDASGFSPGYSPAWSPTPGSPGSPGPSSPYIPSPGGAMSPSYSPTSPAYEPRSPGGYTPQSPSYSPTSPSYSPTSPSYSPTSPNYSPTSPSYSPTSPSYSPTSPSYSPTSPSYSPTSPSYSPTSPSYSPTSPSYSPTSPSYSPTSPSYSPTSPSYSPTSPSYSPTSPSYSPTSPSYSPTSPSYSPTSPSYSPTSPNYSPTSPNYTPTSPSYSPTSPSYSPTSPNYTPTSPNYSPTSPSYSPTSPSYSPTSPSYSPSSPRYTPQSPTYTPSSPSYSPSSPSYSPTSPKYTPTSPSYSPSSPEYTPTSPKYSPTSPKYSPTSPKYSPTSPTYSPTTPKYSPTSPTYSPTSPVYTPTSPKYSPTSPTYSPTSPKYSPTSPTYSPTSPKGSTYSPTSPGYSPTSPTYSLTSPAISPDDSDDEN.

Position 1 is an N-acetylmethionine (methionine 1). Serine 27 is modified (phosphoserine). Residue arginine 67 participates in RNA binding. 8 residues coordinate Zn(2+): cysteine 71, cysteine 74, cysteine 81, histidine 84, cysteine 111, cysteine 114, cysteine 154, and cysteine 184. At serine 217 the chain carries Phosphoserine. DNA is bound by residues lysine 346 and arginine 358. Arginine 460 contacts RNA. The Mg(2+) site is built by asparagine 493, aspartate 495, aspartate 497, and aspartate 499. Aspartate 499 is an RNA binding site. The bridging helix stretch occupies residues 832-873; the sequence is TPTEFFFHAMGGREGLIDTAVKTAETGYIQRRLIKSMESVMV. Residues 1083-1124 are trigger loop; that stretch reads PGEMVGALAAQSLGEPATQMTLNTFHYAGVSAKNVTLGVPRL. Residue lysine 1268 forms a Glycyl lysine isopeptide (Lys-Gly) (interchain with G-Cter in ubiquitin); by NEDD4 linkage. Arginine 1416 and arginine 1421 together coordinate DNA. Residues 1546 to 1568 show a composition bias toward low complexity; the sequence is FSPSAASDASGFSPGYSPAWSPT. The segment at 1546 to 1970 is disordered; sequence FSPSAASDAS…ISPDDSDDEN (425 aa). Residues 1569-1583 are compositionally biased toward pro residues; sequence PGSPGSPGPSSPYIP. Residues 1593 to 1599 form repeat 1; sequence YSPTSPA. Positions 1593 to 1960 are C-terminal domain (CTD); 52 X 7 AA approximate tandem repeats of Y-[ST]-P-[STQ]-[ST]-P-[SRTEVKGN]; that stretch reads YSPTSPAYEP…SPTYSLTSPA (368 aa). The stretch at 1600–1606 is one 2; approximate repeat; sequence YEPRSPG. Arginine 1603 carries the post-translational modification Omega-N-methylated arginine. 48 repeat units span residues 1608 to 1614, 1615 to 1621, 1622 to 1628, 1629 to 1635, 1636 to 1642, 1643 to 1649, 1650 to 1656, 1657 to 1663, 1664 to 1670, 1671 to 1677, 1678 to 1684, 1685 to 1691, 1692 to 1698, 1699 to 1705, 1706 to 1712, 1713 to 1719, 1720 to 1726, 1727 to 1733, 1734 to 1740, 1741 to 1747, 1748 to 1754, 1755 to 1761, 1762 to 1768, 1769 to 1775, 1776 to 1782, 1783 to 1789, 1790 to 1796, 1797 to 1803, 1804 to 1810, 1811 to 1817, 1818 to 1824, 1825 to 1831, 1832 to 1838, 1839 to 1845, 1846 to 1852, 1853 to 1859, 1860 to 1866, 1867 to 1873, 1874 to 1880, 1881 to 1887, 1888 to 1894, 1895 to 1901, 1902 to 1908, 1909 to 1915, 1916 to 1922, 1923 to 1929, 1930 to 1936, and 1940 to 1946. Residues 1608–1959 show a composition bias toward low complexity; the sequence is YTPQSPSYSP…TSPTYSLTSP (352 aa). Asymmetric dimethylarginine; alternate is present on arginine 1810. Arginine 1810 carries the post-translational modification Symmetric dimethylarginine; alternate. An N6,N6-dimethyllysine; alternate modification is found at lysine 1838. Lysine 1838 is subject to N6-methyllysine; alternate. Threonine 1840 carries the post-translational modification Phosphothreonine. Phosphoserine occurs at positions 1843, 1845, 1847, 1849, and 1850. Phosphothreonine is present on threonine 1854. Serine 1857 is subject to Phosphoserine. An N6,N6-dimethyllysine; alternate modification is found at lysine 1859. Lysine 1859 bears the N6-methyllysine; alternate mark. At tyrosine 1860 the chain carries Phosphotyrosine. Serine 1861 is subject to Phosphoserine. Threonine 1863 carries the phosphothreonine modification. Serine 1864 carries the phosphoserine modification. An N6,N6-dimethyllysine; alternate modification is found at lysine 1866. N6-methyllysine; alternate is present on lysine 1866. The residue at position 1866 (lysine 1866) is an N6,N6,N6-trimethyllysine; alternate. Lysine 1866 is modified (N6-acetyllysine; alternate). Tyrosine 1867 bears the Phosphotyrosine mark. Phosphoserine is present on serine 1868. Position 1870 is a phosphothreonine (threonine 1870). Lysine 1873 is subject to N6,N6-dimethyllysine; alternate. N6-methyllysine; alternate is present on lysine 1873. An N6,N6,N6-trimethyllysine; alternate modification is found at lysine 1873. Residue tyrosine 1874 is modified to Phosphotyrosine. Serine 1875 bears the Phosphoserine mark. Position 1877 is a phosphothreonine (threonine 1877). Position 1878 is a phosphoserine (serine 1878). Tyrosine 1881 carries the post-translational modification Phosphotyrosine. Residue serine 1882 is modified to Phosphoserine. Phosphothreonine is present on threonine 1885. Residue lysine 1887 is modified to N6,N6-dimethyllysine; alternate. Residue lysine 1887 is modified to N6-methyllysine; alternate. At lysine 1887 the chain carries N6-acetyllysine; alternate. Threonine 1894 carries the post-translational modification Phosphothreonine. Residues serine 1896, serine 1899, and serine 1906 each carry the phosphoserine modification. At lysine 1908 the chain carries N6,N6-dimethyllysine. Tyrosine 1909 is modified (phosphotyrosine). A Phosphothreonine modification is found at threonine 1912. Serine 1913 is modified (phosphoserine). Threonine 1915 carries the post-translational modification Phosphothreonine. Tyrosine 1916 is subject to Phosphotyrosine. Serine 1917 carries the post-translational modification Phosphoserine. Threonine 1919 is subject to Phosphothreonine. A Phosphoserine modification is found at serine 1920. Lysine 1922 bears the N6,N6-dimethyllysine; alternate mark. N6-methyllysine; alternate is present on lysine 1922. At lysine 1922 the chain carries N6-acetyllysine; alternate. At tyrosine 1923 the chain carries Phosphotyrosine. Residue threonine 1926 is modified to Phosphothreonine. At serine 1927 the chain carries Phosphoserine. Threonine 1929 is modified (phosphothreonine). Tyrosine 1930 carries the post-translational modification Phosphotyrosine. A Phosphoserine modification is found at serine 1931. Threonine 1933 carries the phosphothreonine modification. Serine 1934 is subject to Phosphoserine. Residue lysine 1936 is modified to N6,N6-dimethyllysine; alternate. An N6-methyllysine; alternate modification is found at lysine 1936. N6-acetyllysine; alternate is present on lysine 1936. Residues 1947 to 1953 form a 51; approximate repeat; it reads YSPTSPT. Residues 1954–1960 form a 52; approximate repeat; it reads YSLTSPA.

The protein belongs to the RNA polymerase beta' chain family. As to quaternary structure, component of the RNA polymerase II (Pol II) core complex consisting of 12 subunits: a ten-subunit catalytic core composed of POLR2A/RPB1, POLR2B/RPB2, POLR2C/RPB3, POLR2I/RPB9, POLR2J/RPB11, POLR2E/RPABC1, POLR2F/RPABC2, POLR2H/RPABC3, POLR2K/RPABC4 and POLR2L/RPABC5 and a mobile stalk composed of two subunits POLR2D/RPB4 and POLR2G/RPB7, protruding from the core and functioning primarily in transcription initiation. Part of Pol II(G) complex, in which Pol II core associates with an additional subunit POLR2M; unlike conventional Pol II, Pol II(G) functions as a transcriptional repressor. Part of Pol II pre-initiation complex (PIC), in which Pol II core assembles with Mediator, general transcription factors and other specific initiation factors including GTF2E1, GTF2E2, GTF2F1, GTF2F2, TCEA1, ERCC2, ERCC3, GTF2H2, GTF2H3, GTF2H4, GTF2H5, GTF2A1, GTF2A2, GTF2B and TBP; this large multi-subunit PIC complex mediates DNA unwinding and targets Pol II core to the transcription start site where the first phosphodiester bond forms. Component of a complex which is at least composed of HTATSF1/Tat-SF1, the P-TEFb complex components CDK9 and CCNT1, Pol II, SUPT5H, and NCL/nucleolin. The large PER complex involved in the repression of transcriptional termination is composed of at least PER2, CDK9, DDX5, DHX9, NCBP1 and POLR2A (active). Interacts (via the C-terminal domain (CTD)) with U2AF2; recruits PRPF19 and the Prp19 complex to the pre-mRNA and may couple transcription to pre-mRNA splicing. Interacts (via the C-terminal domain (CTD)) with SMN1/SMN2; recruits SMN1/SMN2 to RNA Pol II elongation complexes. Interacts via the phosphorylated C-terminal domain with WDR82 and with SETD1A and SETD1B only in the presence of WDR82. When phosphorylated at 'Ser-5', interacts with MEN1; the unphosphorylated form, or phosphorylated at 'Ser-2' does not interact. When phosphorylated at 'Ser-5', interacts with ZMYND8; the form phosphorylated at 'Ser-2' does not interact. When phosphorylated at 'Ser-2', interacts with SUPT6H (via SH2 domain). Interacts with RECQL5 and TCEA1; binding of RECQL5 prevents TCEA1 binding. The phosphorylated C-terminal domain interacts with FNBP3. The phosphorylated C-terminal domain interacts with SYNCRIP. Interacts with ATF7IP. Interacts with DDX5. Interacts with WWP2. Interacts with SETX. Interacts (phosphorylated) with PIH1D1. Interacts (via the C-terminal domain (CTD)) with TDRD3. Interacts with PRMT5. Interacts with XRN2. Interacts with SAFB/SAFB1. Interacts with CCNL1. Interacts with CCNL2. Interacts with MYO1C. Interacts with PAF1. Interacts with SFRS19. Interacts (via C-terminus) with CMTR1. Interacts (via C-terminus) with CTDSP1. Interacts (via C-terminus) with SCAF8. Interacts (via the C-terminal domain (CTD)) with CCNT2. Interacts with FUS. Interacts with MCM3AP isoform GANP. Interacts with kinase SRPK2; the interaction occurs during the co-transcriptional formation of inappropriate R-loops. Interacts with SETD2. Interacts with UVSSA. Interacts with ERCC6. Interacts with the TFIIH complex. Requires Mg(2+) as cofactor. Post-translationally, the tandem heptapeptide repeats in the C-terminal domain (CTD) can be highly phosphorylated. The phosphorylation activates Pol II. Phosphorylation occurs mainly at residues 'Ser-2' and 'Ser-5' of the heptapeptide repeat and is mediated, at least, by CDK7 and CDK9. POLR2A associated with DNA is specifically phosphorylated at 'Ser-5' of the CTD by CDK7, promoting transcription initiation by triggering dissociation from DNA. Phosphorylated at 'Ser-2', Ser-5' and 'Ser-7' of the CTD by CDK9 (P-TEFb complex), promoting transcription elongation. Phosphorylation also takes place at 'Ser-7' of the heptapeptide repeat, which is required for efficient transcription of snRNA genes and processing of the transcripts. The phosphorylation state is believed to result from the balanced action of site-specific CTD kinases and phosphatases, and a 'CTD code' that specifies the position of Pol II within the transcription cycle has been proposed. Dephosphorylated by the INTAC complex when transcripts are unfavorably configured for transcriptional elongation, leading to premature transcription termination: dephosphorylation is mediated by the PPP2CA component of the INTAC complex. In response to replication stress, dephosphorylated at 'Ser-5' of the CTD by the PNUTS-PP1 complex, promoting RNA polymerase II degradation. Dephosphorylated by the protein phosphatase CTDSP1. Dephosphorylated at 'Ser-2' following UV irradiation. In terms of processing, among tandem heptapeptide repeats of the C-terminal domain (CTD) some do not match the Y-S-P-T-S-P-S consensus, the seventh serine residue 'Ser-7' being replaced by a lysine. 'Lys-7' in these non-consensus heptapeptide repeats can be alternatively acetylated, methylated and dimethylated. EP300 is one of the enzyme able to acetylate 'Lys-7'. Acetylation at 'Lys-7' of non-consensus heptapeptide repeats is associated with 'Ser-2' phosphorylation and active transcription. Regulates initiation or early elongation steps of transcription specially for inducible genes. Methylated at Arg-1810 prior to transcription initiation when the CTD is hypophosphorylated, phosphorylation at Ser-1805 and Ser-1808 preventing this methylation. Symmetrically or asymmetrically dimethylated at Arg-1810 by PRMT5 and CARM1 respectively. Symmetric or asymmetric dimethylation modulates interactions with CTD-binding proteins like SMN1/SMN2 and TDRD3. SMN1/SMN2 interacts preferentially with the symmetrically dimethylated form while TDRD3 interacts with the asymmetric form. Through the recruitment of SMN1/SMN2, symmetric dimethylation is required for resolving RNA-DNA hybrids created by RNA polymerase II, that form R-loop in transcription terminal regions, an important step in proper transcription termination. CTD dimethylation may also facilitate the expression of select RNAs. Among tandem heptapeptide repeats of the C-terminal domain (CTD) some do not match the Y-S-P-T-S-P-S consensus, the seventh serine residue 'Ser-7' being replaced by a lysine. 'Lys-7' in these non-consensus heptapeptide repeats can be alternatively acetylated, methylated, dimethylated and trimethylated. Methylation occurs in the earliest transcription stages and precedes or is concomitant to 'Ser-5' and 'Ser-7' phosphorylation. Dimethylation and trimehtylation at 'Lys-7' of non-consensus heptapeptide repeats are exclusively associated with phosphorylated CTD. Post-translationally, following transcription stress, the elongating form of RNA polymerase II (RNA pol IIo) is ubiquitinated by the DCX(ERCC8) complex (also named CSA complex) on Lys-1268 at DNA damage sites without leading to degradation: ubiquitination promotes RNA pol IIo backtracking to allow access by the transcription-coupled nucleotide excision repair (TC-NER) machinery. At stalled RNA pol II where TC-NER has failed, RBX1-mediated polybiquitination at Lys-1268 may lead to proteasome-mediated degradation in a UBAP2- and UBAP2L-dependent manner; presumably to halt global transcription and enable 'last resort' DNA repair pathways. Ubiquitinated by the BCR(ARMC5) complex when transcripts are unfavorably configured for transcriptional elongation: the BCR(ARMC5) complex specifically catalyzes ubiquitination of POLR2A phosphorylated at 'Ser-5' of the C-terminal domain (CTD), leading to POLR2A degradation. Ubiquitination by the BCR(ARMC5) complex takes place at residues distinct from Lys-1268. Ubiquitinated by WWP2 leading to proteasomal degradation.

It localises to the nucleus. The protein resides in the cytoplasm. Its subcellular location is the chromosome. The catalysed reaction is RNA(n) + a ribonucleoside 5'-triphosphate = RNA(n+1) + diphosphate. It catalyses the reaction a 3'-end ribonucleotidyl-ribonucleotide-RNA + H2O = a 3'-end ribonucleotide-RNA + a ribonucleoside 5'-phosphate + H(+). Functionally, catalytic core component of RNA polymerase II (Pol II), a DNA-dependent RNA polymerase which synthesizes mRNA precursors and many functional non-coding RNAs using the four ribonucleoside triphosphates as substrates. Pol II-mediated transcription cycle proceeds through transcription initiation, transcription elongation and transcription termination stages. During transcription initiation, Pol II pre-initiation complex (PIC) is recruited to DNA promoters, with focused-type promoters containing either the initiator (Inr) element, or the TATA-box found in cell-type specific genes and dispersed-type promoters that often contain hypomethylated CpG islands usually found in housekeeping genes. Once the polymerase has escaped from the promoter it enters the elongation phase during which RNA is actively polymerized, based on complementarity with the template DNA strand. Transcription termination involves the release of the RNA transcript and polymerase from the DNA. Forms Pol II active center together with the second largest subunit POLR2B/RPB2. Appends one nucleotide at a time to the 3' end of the nascent RNA, with POLR2A/RPB1 most likely contributing a Mg(2+)-coordinating DxDGD motif, and POLR2B/RPB2 participating in the coordination of a second Mg(2+) ion and providing lysine residues believed to facilitate Watson-Crick base pairing between the incoming nucleotide and template base. Typically, Mg(2+) ions direct a 5' nucleoside triphosphate to form a phosphodiester bond with the 3' hydroxyl of the preceding nucleotide of the nascent RNA, with the elimination of pyrophosphate. The reversible pyrophosphorolysis can occur at high pyrophosphate concentrations. Can proofread the nascent RNA transcript by means of a 3' -&gt; 5' exonuclease activity. If a ribonucleotide is mis-incorporated, backtracks along the template DNA and cleaves the phosphodiester bond releasing the mis-incorporated 5'-ribonucleotide. Through its unique C-terminal domain (CTD, 52 heptapeptide tandem repeats) serves as a platform for assembly of factors that regulate transcription initiation, elongation and termination. CTD phosphorylation on Ser-5 mediates Pol II promoter escape, whereas phosphorylation on Ser-2 is required for Pol II pause release during transcription elongation and further pre-mRNA processing. Additionally, the regulation of gene expression levels depends on the balance between methylation and acetylation levels of the CTD-lysines. Initiation or early elongation steps of transcription of growth-factor-induced immediate early genes are regulated by the acetylation status of the CTD. Methylation and dimethylation have a repressive effect on target genes expression. Cooperates with mRNA splicing machinery in co-transcriptional 5'-end capping and co-transcriptional splicing of pre-mRNA. RNA-dependent RNA polymerase that catalyzes the extension of a non-coding RNA (ncRNA) at the 3'-end using the four ribonucleoside triphosphates as substrates. An internal ncRNA sequence near the 3'-end serves as a template in a single-round Pol II-mediated RNA polymerization reaction. May decrease the stability of ncRNAs that repress Pol II-mediated gene transcription. The chain is DNA-directed RNA polymerase II subunit RPB1 (POLR2A) from Bos taurus (Bovine).